The sequence spans 506 residues: MAVDMELDGGGDGKGKAPPQISLSGLFLACMVAGGVQYGWALQLSLLTPYIQTLGIPHALTSVMWLCGPIAGLIVQPCVGLYSDKCTSSLGRRRPFILTGCIIICISVIVIGFSSDIGYALGDATEDCKVYRGPRYHAAAAFILGFWLLDFSNNTVQGPARALMADLSGRHGPSAANAIFCSWMALGNILGYSSGSTNDWHKWFPFLMTRACCEACANLKAAFLVAVVFLGLSTAVTMVFAREVALDPVAAAKRNEGEASGPLAVFKGMKNLPVGMPSVLIVTGLTWLSWFPFILFDTDWMGREIYHGRPDGSPAEVTAFQEGVRQGAFGLLLNSIVLGISSFLIEPMCRRLGARAVWVMSSAVVCVAMAAVSVLSAWSLGDFGGSVQDAARAPAEEGGVRASALALFVFLGLPFAVLCSVPFAVTAQLTASRGGGQGLCTGVLNISIVVPQMAIALGAGPWDELFGEGNIPAFAMASVFAAAAAAAGVVLLPKVSVRSVSMAGGH.

Over 1 to 20 (MAVDMELDGGGDGKGKAPPQ) the chain is Cytoplasmic. The chain crosses the membrane as a helical span at residues 21-41 (ISLSGLFLACMVAGGVQYGWA). Residues 42-54 (LQLSLLTPYIQTL) lie on the Extracellular side of the membrane. The chain crosses the membrane as a helical span at residues 55 to 75 (GIPHALTSVMWLCGPIAGLIV). Topologically, residues 76–94 (QPCVGLYSDKCTSSLGRRR) are cytoplasmic. Residues 95–115 (PFILTGCIIICISVIVIGFSS) form a helical membrane-spanning segment. The Extracellular segment spans residues 116–135 (DIGYALGDATEDCKVYRGPR). The helical transmembrane segment at 136–156 (YHAAAAFILGFWLLDFSNNTV) threads the bilayer. Over 157 to 171 (QGPARALMADLSGRH) the chain is Cytoplasmic. The chain crosses the membrane as a helical span at residues 172–192 (GPSAANAIFCSWMALGNILGY). The Extracellular portion of the chain corresponds to 193–220 (SSGSTNDWHKWFPFLMTRACCEACANLK). The helical transmembrane segment at 221 to 241 (AAFLVAVVFLGLSTAVTMVFA) threads the bilayer. Residues 242 to 275 (REVALDPVAAAKRNEGEASGPLAVFKGMKNLPVG) are Cytoplasmic-facing. Residues 276-296 (MPSVLIVTGLTWLSWFPFILF) traverse the membrane as a helical segment. Residues 297 to 327 (DTDWMGREIYHGRPDGSPAEVTAFQEGVRQG) lie on the Extracellular side of the membrane. The helical transmembrane segment at 328 to 348 (AFGLLLNSIVLGISSFLIEPM) threads the bilayer. At 349-355 (CRRLGAR) the chain is on the cytoplasmic side. Residues 356–376 (AVWVMSSAVVCVAMAAVSVLS) traverse the membrane as a helical segment. Residues 377 to 404 (AWSLGDFGGSVQDAARAPAEEGGVRASA) lie on the Extracellular side of the membrane. Residues 405 to 425 (LALFVFLGLPFAVLCSVPFAV) form a helical membrane-spanning segment. The Cytoplasmic portion of the chain corresponds to 426–441 (TAQLTASRGGGQGLCT). Residues 442–462 (GVLNISIVVPQMAIALGAGPW) traverse the membrane as a helical segment. Residues 463–470 (DELFGEGN) lie on the Extracellular side of the membrane. The chain crosses the membrane as a helical span at residues 471–491 (IPAFAMASVFAAAAAAAGVVL). At 492-506 (LPKVSVRSVSMAGGH) the chain is on the cytoplasmic side.

It belongs to the glycoside-pentoside-hexuronide (GPH) cation symporter transporter (TC 2.A.2.4) family. In terms of assembly, homodimer.

It localises to the cell membrane. It participates in glycan biosynthesis; sucrose metabolism. In terms of biological role, responsible for the transport of sucrose into the cell, with the concomitant uptake of protons (symport system). May also transport other glucosides. The protein is Sucrose transport protein SUT3 (SUT3) of Oryza sativa subsp. indica (Rice).